We begin with the raw amino-acid sequence, 158 residues long: Transcription elongation factor GreA (158 aa).

Positions 45–72 form a coiled coil; the sequence is AEYHAAREQQSFIEGRIKQLEGELSHAE.

The protein belongs to the GreA/GreB family.

Necessary for efficient RNA polymerase transcription elongation past template-encoded arresting sites. The arresting sites in DNA have the property of trapping a certain fraction of elongating RNA polymerases that pass through, resulting in locked ternary complexes. Cleavage of the nascent transcript by cleavage factors such as GreA or GreB allows the resumption of elongation from the new 3'terminus. GreA releases sequences of 2 to 3 nucleotides. The sequence is that of Transcription elongation factor GreA from Xanthomonas campestris pv. campestris (strain ATCC 33913 / DSM 3586 / NCPPB 528 / LMG 568 / P 25).